Reading from the N-terminus, the 201-residue chain is ATP-dependent dethiobiotin synthetase BioD (201 aa).

11–16 (DVGKTH) is a binding site for ATP. Residue Thr15 coordinates Mg(2+). Residue Lys31 is part of the active site. Residues Asp40 and 93–96 (ELAG) each bind ATP. Asp40 and Glu93 together coordinate Mg(2+).

It belongs to the dethiobiotin synthetase family. As to quaternary structure, homodimer. The cofactor is Mg(2+).

The protein localises to the cytoplasm. It catalyses the reaction (7R,8S)-7,8-diammoniononanoate + CO2 + ATP = (4R,5S)-dethiobiotin + ADP + phosphate + 3 H(+). It participates in cofactor biosynthesis; biotin biosynthesis; biotin from 7,8-diaminononanoate: step 1/2. In terms of biological role, catalyzes a mechanistically unusual reaction, the ATP-dependent insertion of CO2 between the N7 and N8 nitrogen atoms of 7,8-diaminopelargonic acid (DAPA, also called 7,8-diammoniononanoate) to form a ureido ring. This chain is ATP-dependent dethiobiotin synthetase BioD, found in Campylobacter jejuni subsp. jejuni serotype O:6 (strain 81116 / NCTC 11828).